Here is a 791-residue protein sequence, read N- to C-terminus: DUF1769 family protein duc1 (791 aa).

The tract at residues 158–189 (ADSQESDTESLPEINDSSDVSLSDLPSTNVTP) is disordered. The segment covering 174-184 (SSDVSLSDLPS) has biased composition (low complexity). Residues 373–379 (RYFTALE) carry the FFAT motif. Y374 is modified (phosphotyrosine). A Phosphothreonine modification is found at T376. Disordered stretches follow at residues 381–505 (QQDQ…SNRR), 542–606 (NVAG…VDGK), and 630–658 (PKPV…NLDP). Residues 415–426 (LIKRMSLRSKKS) are compositionally biased toward basic residues. Residues 444–453 (STASAASTSA) are compositionally biased toward low complexity. Residues 455-473 (KTEKEKKMSAPRRSLDKLI) are compositionally biased toward basic and acidic residues. Phosphoserine is present on residues S477 and S493. A compositionally biased stretch (basic residues) spans 477–487 (SLHRHHHHHHK). The span at 555–564 (EQTSITSGVP) shows a compositional bias: polar residues. S574 is subject to Phosphoserine. Over residues 574-586 (STPEKIVEERSID) the composition is skewed to basic and acidic residues. The segment covering 587-601 (EVSQSNTPSSKQLPQ) has biased composition (polar residues).

It belongs to the UPF0590 family. In terms of assembly, interacts (via FFAT-motif) with scs2 (via MSP domain); the interaction is direct and serves to restrict the localization of duc1 to areas of cell membrane-endoplasmic reticulum contact sites, and away from the cell division site.

The protein localises to the cell membrane. In terms of biological role, promotes the proper distribution of phosphatidylinositol 4,5-bisphosphate (PtdIns(4,5)P2/PIP2) synthesis at the cell membrane. May bind phosphatidylinositol 4,5-bisphosphate (PtdIns(4,5)P2/PIP2) and is required for robust anchoring of the contractile ring to the cell membrane. The protein is DUF1769 family protein duc1 of Schizosaccharomyces pombe (strain 972 / ATCC 24843) (Fission yeast).